The chain runs to 355 residues: Glucose-6-phosphatase 2 (355 aa).

Over Met-1–Thr-24 the chain is Lumenal. Residues Phe-25–Leu-45 traverse the membrane as a helical segment. The Cytoplasmic portion of the chain corresponds to Cys-46–Lys-56. Residues Met-57–Gly-77 form a helical membrane-spanning segment. At His-78 to His-115 the chain is on the lumenal side. Position 79 (Arg-79) interacts with substrate. N-linked (GlcNAc...) asparagine glycosylation occurs at Asn-92. His-115 functions as the Proton donor in the catalytic mechanism. The helical transmembrane segment at Ala-116–Cys-136 threads the bilayer. At Gly-137 to His-146 the chain is on the cytoplasmic side. A helical membrane pass occupies residues Arg-147–Ser-167. Residue Arg-168 is a topological domain, lumenal. Substrate is bound at residue Arg-168. The helical transmembrane segment at Val-169 to Val-189 threads the bilayer. Residue His-174 is the Nucleophile of the active site. Over Ala-190 to Asn-211 the chain is Cytoplasmic. The chain crosses the membrane as a helical span at residues Leu-212–Leu-232. The Lumenal portion of the chain corresponds to Leu-233–Arg-261. A helical transmembrane segment spans residues Asn-262 to Cys-282. The Cytoplasmic portion of the chain corresponds to Arg-283–Arg-293. Residues Leu-294–Thr-314 form a helical membrane-spanning segment. Residues His-315–His-318 lie on the Lumenal side of the membrane. A helical transmembrane segment spans residues Leu-319 to Ile-339. Residues Pro-340–Gln-355 lie on the Cytoplasmic side of the membrane. The Prevents secretion from ER signature appears at Lys-352–Gln-355.

It belongs to the glucose-6-phosphatase family. Post-translationally, N-glycosylated; the non-glycosylated form is more unstable and is degraded through the proteasome. Specifically expressed in pancreas and also detected to a lower extent in testis. Expressed by most islet cells in the pancreas (at protein level).

It is found in the endoplasmic reticulum membrane. It carries out the reaction D-glucose 6-phosphate + H2O = D-glucose + phosphate. The protein operates within carbohydrate biosynthesis; gluconeogenesis. Its function is as follows. May hydrolyze glucose-6-phosphate to glucose in the endoplasmic reticulum. May be responsible for glucose production through glycogenolysis and gluconeogenesis. The protein is Glucose-6-phosphatase 2 (G6PC2) of Homo sapiens (Human).